We begin with the raw amino-acid sequence, 427 residues long: cAMP-dependent protein kinase regulatory subunit (427 aa).

Residues 38–184 are dimerization and phosphorylation; the sequence is QFCSNFFIRK…RIKVSISNNF (147 aa). Residues 96–145 form a disordered region; sequence TTHMGHPNDHGALHDDDDDPLEDEDDEEFDKFSTEPLPSLPPTNYNRGRR. The span at 110–124 shows a compositional bias: acidic residues; that stretch reads DDDDDPLEDEDDEEF. The residue at position 147 (S147) is a Phosphoserine. 3',5'-cyclic AMP is bound by residues 185–300, E250, R259, 303–422, E372, and R381; these read LFRN…FLSE and LLKS…YHAV.

The protein belongs to the cAMP-dependent kinase regulatory chain family. In terms of assembly, tetramer, composed of 2 regulatory (R) and 2 catalytic (C) subunits. In the presence of cAMP it dissociates into 2 active monomeric C subunits and an R dimer.

The polypeptide is cAMP-dependent protein kinase regulatory subunit (pkar) (Mucor circinelloides f. lusitanicus (Mucor racemosus var. lusitanicus)).